The sequence spans 1080 residues: Phycobiliprotein ApcE (1080 aa).

Positions 18-76 (QTLAVATITQAEQQDRFLGTGELNELATYFASGAKRLEIAQTLTENSEIIVSRAANRIF) are phycobilin-like 1. The segment at 77 to 144 (VGGSPMSFLE…GPTPPGFRPI (68 aa)) is phycobilin-like loop. The segment at 145-237 (NVARYGPSNM…YMDVLLTEFK (93 aa)) is phycobilin-like 2. (2R,3E)-phycocyanobilin is bound at residue cysteine 195. PBS-linker domains lie at 252–432 (DQQG…FRKV), 514–693 (LGPK…QKQE), 710–888 (PDIQ…KQND), and 922–1080 (STSA…SLGN). The tract at residues 906–930 (GTSSSGRNGFTDLGRSSTSAQGQLG) is disordered.

This sequence belongs to the phycobilisome linker protein family. Phycobilisomes of this organism are composed of a two cylinder core, from which six rods radiate. The core is mainly composed of allophycocyanin alpha and beta chains, and of three minor components: the allophycocyanin alpha-B chain, a 18.3 kDa polypeptide, and the anchor polypeptide L-CM. Post-translationally, contains one covalently linked bilin chromophore. This protein autochromophorylates.

It is found in the cellular thylakoid membrane. This protein is postulated to act both as terminal energy acceptor (by its phycobilin-like domains) and as a linker polypeptide (by its repeats and arms) that stabilizes the phycobilisome core architecture. Functionally, has intrinsic bilin lyase activity. The sequence is that of Phycobiliprotein ApcE (apcE) from Microchaete diplosiphon (Fremyella diplosiphon).